We begin with the raw amino-acid sequence, 367 residues long: Choline-phosphate cytidylyltransferase A (367 aa).

Position 1 is an N-acetylmethionine (Met-1). Residues 1–33 (MDAQCSAKVNARKRRKEAPGPNGATEEDGVPSK) are disordered. Lys-8 carries the N6-acetyllysine modification. CTP contacts are provided by Ile-84, Phe-85, His-92, and Lys-122. Phosphocholine contacts are provided by Lys-122 and Trp-151. His-168, Asp-169, Tyr-173, Gln-195, Arg-196, Thr-197, and Ile-200 together coordinate CTP. Amphipathic stretches follow at residues 228–287 (KELN…EFIG) and 298–315 (ALKH…QAIS). Phosphoserine is present on Ser-233. The autoinhibitory (AI) stretch occupies residues 272–293 (IDLIQKWEEKSREFIGSFLEMF). Residues 313–367 (AISPKQSPSSSPTRERSPSPSFRWPFSGKTSPPCSPANLSRHKAAAYDISEDEED) form a disordered region. Ser-315, Ser-319, Ser-321, Ser-322, and Ser-323 each carry phosphoserine. The stretch at 319–324 (SPSSSP) is repeat 1. Residues 319-339 (SPSSSPTRERSPSPSFRWPFS) are compositionally biased toward low complexity. Position 325 is a phosphothreonine (Thr-325). A phosphoserine mark is found at Ser-329, Ser-331, and Ser-333. The 2; approximate repeat unit spans residues 329 to 333 (SPSPS). A Phosphothreonine modification is found at Thr-342. 4 positions are modified to phosphoserine: Ser-343, Ser-347, Ser-352, and Ser-362. Residues 343–348 (SPPCSP) form repeat 3.

This sequence belongs to the cytidylyltransferase family. In terms of assembly, homodimer. The serine residues of the C-terminus are phosphorylated. The inactive soluble form is stabilized by phosphorylation, the active membrane bound form is promoted by anionic lipids or diacylglycerol, and is stabilized by dephosphorylation. Post-translationally, monoubiquitinated by the SCF(FBXL2) complex, leading to proteasomal degradation. Brain, placenta, liver, fetal and adult lung.

It is found in the cytoplasm. Its subcellular location is the cytosol. The protein localises to the membrane. It localises to the endoplasmic reticulum membrane. The protein resides in the nucleus. It carries out the reaction phosphocholine + CTP + H(+) = CDP-choline + diphosphate. The protein operates within phospholipid metabolism; phosphatidylcholine biosynthesis; phosphatidylcholine from phosphocholine: step 1/2. Its activity is regulated as follows. Interconverts between an inactive cytosolic form and an active membrane-bound form. Activation involves disruption of an inhibitory interaction between helices at the base of the active site and the autoinhibitory (AI) region. Activated by anionic lipid vesicles and by oleic acid or diacylglycerol-containing phosphatidylcholine vesicles. Its function is as follows. Catalyzes the key rate-limiting step in the CDP-choline pathway for phosphatidylcholine biosynthesis. In Homo sapiens (Human), this protein is Choline-phosphate cytidylyltransferase A (PCYT1A).